The primary structure comprises 160 residues: Nucleotide-binding protein Noc_2254 (160 aa).

It belongs to the YajQ family.

Functionally, nucleotide-binding protein. This Nitrosococcus oceani (strain ATCC 19707 / BCRC 17464 / JCM 30415 / NCIMB 11848 / C-107) protein is Nucleotide-binding protein Noc_2254.